A 596-amino-acid polypeptide reads, in one-letter code: SUN domain-containing protein 4 (596 aa).

A helical transmembrane segment spans residues 28–48 (VSLSLVFLIWGLVFLSTLWIS). Disordered regions lie at residues 58 to 98 (LVDS…LSSD) and 139 to 158 (KQSE…TTGS). Over residues 66-77 (EPDDERADETAE) the composition is skewed to acidic residues. 2 stretches are compositionally biased toward polar residues: residues 80–95 (DATS…NPGL) and 141–158 (SEIN…TTGS). The SUN domain occupies 179 to 343 (SNSRDKSLSG…SLLEVYGVDA (165 aa)). Basic and acidic residues predominate over residues 366–396 (DTEQKEKKTMQAKESFESDEDKSKQKEKEQE). The disordered stretch occupies residues 366–410 (DTEQKEKKTMQAKESFESDEDKSKQKEKEQEASPENAVVKDEVSL). A coiled-coil region spans residues 475–544 (ASKREKEVET…LERLEWMEKK (70 aa)). Transmembrane regions (helical) follow at residues 545–565 (GVVV…AVVF) and 576–596 (GGLA…ILSL).

As to quaternary structure, forms homomers and heteromers with SUN3. Interacts with SUN1, SUN2 and TIK.

The protein localises to the nucleus membrane. It is found in the endoplasmic reticulum membrane. Functionally, encodes a member of the mid-SUN subfamily of SUN-domain proteins that is localized to both the nuclear envelope and the ER. It is involved in early seed development and nuclear morphology. [TAIR]. The protein is SUN domain-containing protein 4 of Arabidopsis thaliana (Mouse-ear cress).